A 170-amino-acid chain; its full sequence is Arginine repressor (170 aa).

The protein belongs to the ArgR family.

The protein localises to the cytoplasm. Its pathway is amino-acid biosynthesis; L-arginine biosynthesis [regulation]. Regulates arginine biosynthesis genes. The sequence is that of Arginine repressor from Bifidobacterium longum (strain DJO10A).